The chain runs to 113 residues: MGIFQLLRDRRISSRGPGLHTPKAEPRRRKGLTTGLMTQAERQKQAHQRQAAMRETALWCTGHIRPRTHTHTGTHTQTDRERERNTQRLRDRERRENGRHTHTYTHRHTHRVL.

The tract at residues 1–113 (MGIFQLLRDR…YTHRHTHRVL (113 aa)) is disordered. Basic and acidic residues predominate over residues 77-99 (QTDRERERNTQRLRDRERRENGR). The span at 100 to 113 (HTHTYTHRHTHRVL) shows a compositional bias: basic residues.

This sequence belongs to the FAM27 family.

The polypeptide is Protein FAM27E3 (FAM27E3) (Homo sapiens (Human)).